The primary structure comprises 243 residues: 1-(5-phosphoribosyl)-5-[(5-phosphoribosylamino)methylideneamino] imidazole-4-carboxamide isomerase (243 aa).

Catalysis depends on Asp-8, which acts as the Proton acceptor. Catalysis depends on Asp-130, which acts as the Proton donor.

It belongs to the HisA/HisF family.

It localises to the cytoplasm. The catalysed reaction is 1-(5-phospho-beta-D-ribosyl)-5-[(5-phospho-beta-D-ribosylamino)methylideneamino]imidazole-4-carboxamide = 5-[(5-phospho-1-deoxy-D-ribulos-1-ylimino)methylamino]-1-(5-phospho-beta-D-ribosyl)imidazole-4-carboxamide. The protein operates within amino-acid biosynthesis; L-histidine biosynthesis; L-histidine from 5-phospho-alpha-D-ribose 1-diphosphate: step 4/9. The sequence is that of 1-(5-phosphoribosyl)-5-[(5-phosphoribosylamino)methylideneamino] imidazole-4-carboxamide isomerase from Acinetobacter baumannii (strain SDF).